The primary structure comprises 716 residues: Calpain clp-4 (716 aa).

A disordered region spans residues 31–53 (DDDDKQEAPVAVSKAPKGKGSNH). The 297-residue stretch at 240–536 (LFEDPEFPAT…FTQMEVCNLT (297 aa)) folds into the Calpain catalytic domain. Catalysis depends on residues Cys-295, His-452, and Asn-476.

It belongs to the peptidase C2 family.

In terms of biological role, calcium-regulated non-lysosomal thiol-protease which catalyzes limited proteolysis of substrates. Promotes starvation-induced muscle atrophy. The chain is Calpain clp-4 from Caenorhabditis elegans.